A 383-amino-acid chain; its full sequence is Succinyl-diaminopimelate desuccinylase (383 aa).

Zn(2+) is bound at residue H74. D76 is a catalytic residue. D107 contacts Zn(2+). The active-site Proton acceptor is E141. Zn(2+)-binding residues include E142, E170, and H356.

This sequence belongs to the peptidase M20A family. DapE subfamily. Homodimer. The cofactor is Zn(2+). It depends on Co(2+) as a cofactor.

It carries out the reaction N-succinyl-(2S,6S)-2,6-diaminopimelate + H2O = (2S,6S)-2,6-diaminopimelate + succinate. It functions in the pathway amino-acid biosynthesis; L-lysine biosynthesis via DAP pathway; LL-2,6-diaminopimelate from (S)-tetrahydrodipicolinate (succinylase route): step 3/3. Its function is as follows. Catalyzes the hydrolysis of N-succinyl-L,L-diaminopimelic acid (SDAP), forming succinate and LL-2,6-diaminopimelate (DAP), an intermediate involved in the bacterial biosynthesis of lysine and meso-diaminopimelic acid, an essential component of bacterial cell walls. In Cupriavidus necator (strain ATCC 17699 / DSM 428 / KCTC 22496 / NCIMB 10442 / H16 / Stanier 337) (Ralstonia eutropha), this protein is Succinyl-diaminopimelate desuccinylase.